The chain runs to 274 residues: Large ribosomal subunit protein uL2 (274 aa).

A disordered region spans residues 228–254 (VDHPMGGGEGRASGGHPRSRKGLYAKG). The segment covering 244–254 (PRSRKGLYAKG) has biased composition (basic residues).

This sequence belongs to the universal ribosomal protein uL2 family. As to quaternary structure, part of the 50S ribosomal subunit. Forms a bridge to the 30S subunit in the 70S ribosome.

One of the primary rRNA binding proteins. Required for association of the 30S and 50S subunits to form the 70S ribosome, for tRNA binding and peptide bond formation. It has been suggested to have peptidyltransferase activity; this is somewhat controversial. Makes several contacts with the 16S rRNA in the 70S ribosome. This chain is Large ribosomal subunit protein uL2, found in Azobacteroides pseudotrichonymphae genomovar. CFP2.